The chain runs to 22 residues: Defensin D1 (22 aa).

This sequence belongs to the DEFL family. Group II subfamily.

Antimicrobial peptide. Active against Gram-positive and Gram-negative bacterial pathogens. This is Defensin D1 from Spinacia oleracea (Spinach).